The sequence spans 494 residues: Guanosine-5'-triphosphate,3'-diphosphate pyrophosphatase (494 aa).

It belongs to the GppA/Ppx family. GppA subfamily.

It carries out the reaction guanosine 3'-diphosphate 5'-triphosphate + H2O = guanosine 3',5'-bis(diphosphate) + phosphate + H(+). It participates in purine metabolism; ppGpp biosynthesis; ppGpp from GTP: step 2/2. Catalyzes the conversion of pppGpp to ppGpp. Guanosine pentaphosphate (pppGpp) is a cytoplasmic signaling molecule which together with ppGpp controls the 'stringent response', an adaptive process that allows bacteria to respond to amino acid starvation, resulting in the coordinated regulation of numerous cellular activities. The sequence is that of Guanosine-5'-triphosphate,3'-diphosphate pyrophosphatase from Shigella flexneri.